Consider the following 355-residue polypeptide: Zinc transporter ZIP13 homolog (355 aa).

A glycan (N-linked (GlcNAc...) asparagine) is linked at Asn-4. 3 helical membrane-spanning segments follow: residues 37–57 (VFSLLGSVVIGLSGIFPLIII), 79–99 (VLLSFAVGGLLGDVFLHLLPE), and 118–138 (LWVLSGILIFTIVEKIFSGYA). An N-linked (GlcNAc...) asparagine glycan is attached at Asn-218. Transmembrane regions (helical) follow at residues 273 to 293 (LLTAGAGLLGALVAIGGSGVT) and 301 to 321 (SWIMPFTAGGFLHIALVTVLP).

The protein belongs to the ZIP transporter (TC 2.A.5) family. KE4/Catsup subfamily.

The protein localises to the basolateral cell membrane. It localises to the golgi apparatus membrane. Its function is as follows. Involved in zinc transport and homeostasis. The sequence is that of Zinc transporter ZIP13 homolog (Zip99C) from Drosophila melanogaster (Fruit fly).